Consider the following 523-residue polypeptide: GMP synthase [glutamine-hydrolyzing] (523 aa).

A Glutamine amidotransferase type-1 domain is found at 8 to 205 (KILILDFGSQ…VVNICGCATN (198 aa)). Residue Cys-85 is the Nucleophile of the active site. Active-site residues include His-179 and Glu-181. The 193-residue stretch at 206–398 (WTPENIIEDA…LGLPAEMLNR (193 aa)) folds into the GMPS ATP-PPase domain. An ATP-binding site is contributed by 233–239 (SGGVDSS).

As to quaternary structure, homodimer.

It carries out the reaction XMP + L-glutamine + ATP + H2O = GMP + L-glutamate + AMP + diphosphate + 2 H(+). Its pathway is purine metabolism; GMP biosynthesis; GMP from XMP (L-Gln route): step 1/1. Catalyzes the synthesis of GMP from XMP. This is GMP synthase [glutamine-hydrolyzing] from Actinobacillus succinogenes (strain ATCC 55618 / DSM 22257 / CCUG 43843 / 130Z).